Reading from the N-terminus, the 286-residue chain is ATP synthase gamma chain (286 aa).

Belongs to the ATPase gamma chain family. As to quaternary structure, F-type ATPases have 2 components, CF(1) - the catalytic core - and CF(0) - the membrane proton channel. CF(1) has five subunits: alpha(3), beta(3), gamma(1), delta(1), epsilon(1). CF(0) has three main subunits: a, b and c.

The protein localises to the cell inner membrane. Functionally, produces ATP from ADP in the presence of a proton gradient across the membrane. The gamma chain is believed to be important in regulating ATPase activity and the flow of protons through the CF(0) complex. The polypeptide is ATP synthase gamma chain (Fuscovulum blasticum (Rhodobacter blasticus)).